We begin with the raw amino-acid sequence, 256 residues long: MASATLAFSCSSLCATLKLPQNLNPLLLNVPPLSKPFSGVVSPPSLSRLSLLPVAAKRRRFQEIPEELKAEFEEFQRPPNQKPQLSDVLPDDFQAPEPGTPEYNDIINQFLPKKGPPPPREEIFAVVVIGSRQYIVIPGRWIYTQRLKGATVNDKIVLNKVLLVGTKASTYIGTPIVTNAAVHAVVEEQLLDDKVIVFKYKKKKNYRRNIGHRQPITRIKITGITGYEDYPASTLEAEVEAKEEAEAEAEAEAVPV.

A chloroplast-targeting transit peptide spans 1–55 (MASATLAFSCSSLCATLKLPQNLNPLLLNVPPLSKPFSGVVSPPSLSRLSLLPVA).

In terms of assembly, component of the chloroplast large ribosomal subunit (LSU). Mature 70S chloroplast ribosomes of higher plants consist of a small (30S) and a large (50S) subunit. The 30S small subunit contains 1 molecule of ribosomal RNA (16S rRNA) and 24 different proteins. The 50S large subunit contains 3 rRNA molecules (23S, 5S and 4.5S rRNA) and 33 different proteins.

It is found in the plastid. Its subcellular location is the chloroplast. Functionally, component of the chloroplast ribosome (chloro-ribosome), a dedicated translation machinery responsible for the synthesis of chloroplast genome-encoded proteins, including proteins of the transcription and translation machinery and components of the photosynthetic apparatus. In Spinacia oleracea (Spinach), this protein is Large ribosomal subunit protein bL21c (RPL21).